A 395-amino-acid chain; its full sequence is S-adenosylmethionine synthase (395 aa).

Glu10 contributes to the Mg(2+) binding site. ATP is bound at residue His16. Glu44 lines the K(+) pocket. L-methionine contacts are provided by Glu57 and Gln100. ATP-binding positions include Asp168–Lys170, Ser236–Phe239, Arg253–Lys254, Ala270, Lys274, and Lys278. Lys278 lines the L-methionine pocket.

The protein belongs to the AdoMet synthase family. Homotetramer. Mn(2+) serves as cofactor. The cofactor is Mg(2+). Requires Co(2+) as cofactor. It depends on K(+) as a cofactor.

It is found in the cytoplasm. The enzyme catalyses L-methionine + ATP + H2O = S-adenosyl-L-methionine + phosphate + diphosphate. It participates in amino-acid biosynthesis; S-adenosyl-L-methionine biosynthesis; S-adenosyl-L-methionine from L-methionine: step 1/1. Functionally, catalyzes the formation of S-adenosylmethionine from methionine and ATP. The reaction comprises two steps that are both catalyzed by the same enzyme: formation of S-adenosylmethionine (AdoMet) and triphosphate, and subsequent hydrolysis of the triphosphate. In Populus deltoides (Eastern poplar), this protein is S-adenosylmethionine synthase (METK).